The following is a 218-amino-acid chain: Octanoyltransferase (218 aa).

In terms of domain architecture, BPL/LPL catalytic spans 31 to 206; the sequence is REAADEVWLV…QLVKHLDYAE (176 aa). Residues 70–77, 137–139, and 150–152 contribute to the substrate site; these read RGGQVTYH, SLG, and GLA. The active-site Acyl-thioester intermediate is the cysteine 168.

Belongs to the LipB family.

Its subcellular location is the cytoplasm. The catalysed reaction is octanoyl-[ACP] + L-lysyl-[protein] = N(6)-octanoyl-L-lysyl-[protein] + holo-[ACP] + H(+). Its pathway is protein modification; protein lipoylation via endogenous pathway; protein N(6)-(lipoyl)lysine from octanoyl-[acyl-carrier-protein]: step 1/2. Functionally, catalyzes the transfer of endogenously produced octanoic acid from octanoyl-acyl-carrier-protein onto the lipoyl domains of lipoate-dependent enzymes. Lipoyl-ACP can also act as a substrate although octanoyl-ACP is likely to be the physiological substrate. The polypeptide is Octanoyltransferase (Pseudomonas syringae pv. syringae (strain B728a)).